The chain runs to 893 residues: UPF0182 protein CLK_3152 (893 aa).

7 helical membrane passes run 9-29, 49-69, 94-114, 154-174, 202-222, 246-266, and 273-293; these read IPLFIIILFIAFFNKIINFII, AIIILMIPIFIIFFISIWMYY, LFFIFNFIVSIFLAYIFSSSY, VIISLLLFLVITTFIAYFILE, LAIVSGLIILFISFGHLIKIW, FYKIIVVITLISSIVTLLSIV, and VSICIGITIFLIVSQNIASFL.

This sequence belongs to the UPF0182 family.

Its subcellular location is the cell membrane. In Clostridium botulinum (strain Loch Maree / Type A3), this protein is UPF0182 protein CLK_3152.